We begin with the raw amino-acid sequence, 284 residues long: D-tagatose-1,6-bisphosphate aldolase subunit GatY (284 aa).

The Proton donor role is filled by aspartate 82. Histidine 83 and histidine 180 together coordinate Zn(2+). Glycine 181 provides a ligand contact to dihydroxyacetone phosphate. Residue histidine 208 coordinates Zn(2+). Dihydroxyacetone phosphate contacts are provided by residues 209-211 (GAS) and 230-233 (NVAT).

Belongs to the class II fructose-bisphosphate aldolase family. TagBP aldolase GatY subfamily. As to quaternary structure, forms a complex with GatZ. Zn(2+) is required as a cofactor.

The catalysed reaction is D-tagatofuranose 1,6-bisphosphate = D-glyceraldehyde 3-phosphate + dihydroxyacetone phosphate. It participates in carbohydrate metabolism; D-tagatose 6-phosphate degradation; D-glyceraldehyde 3-phosphate and glycerone phosphate from D-tagatose 6-phosphate: step 2/2. Its function is as follows. Catalytic subunit of the tagatose-1,6-bisphosphate aldolase GatYZ, which catalyzes the reversible aldol condensation of dihydroxyacetone phosphate (DHAP or glycerone-phosphate) with glyceraldehyde 3-phosphate (G3P) to produce tagatose 1,6-bisphosphate (TBP). Requires GatZ subunit for full activity and stability. Is involved in the catabolism of galactitol. The sequence is that of D-tagatose-1,6-bisphosphate aldolase subunit GatY from Escherichia coli O6:H1 (strain CFT073 / ATCC 700928 / UPEC).